The sequence spans 179 residues: Tetratricopeptide repeat protein 36 (179 aa).

TPR repeat units lie at residues Ser-43–Asn-76, Ser-78–Lys-110, and Cys-115–Phe-148.

It belongs to the TTC36 family.

The protein is Tetratricopeptide repeat protein 36 of Caenorhabditis elegans.